The chain runs to 195 residues: COMM domain-containing protein 3 (195 aa).

One can recognise a COMM domain in the interval 124–192 (HIIDVNWRLD…DAQKQIERSS (69 aa)).

It belongs to the COMM domain-containing protein 3 family. As to quaternary structure, component of the commander complex consisting of the CCC subcomplex and the retriever subcomplex. Component of the CCC subcomplex.

Its function is as follows. Scaffold protein in the commander complex that is essential for endosomal recycling of transmembrane cargos; the commander complex is composed of the CCC subcomplex and the retriever subcomplex. The polypeptide is COMM domain-containing protein 3 (commd3) (Dictyostelium discoideum (Social amoeba)).